Reading from the N-terminus, the 152-residue chain is Lipoprotein signal peptidase (152 aa).

A run of 2 helical transmembrane segments spans residues 55 to 75 (NKMW…VFYM) and 85 to 105 (LGIS…DRVF). Residues Asp-111 and Asp-129 contribute to the active site. A helical transmembrane segment spans residues 124 to 144 (VFNIADSALCIGVVLIIIQTL).

Belongs to the peptidase A8 family.

The protein resides in the cell membrane. It carries out the reaction Release of signal peptides from bacterial membrane prolipoproteins. Hydrolyzes -Xaa-Yaa-Zaa-|-(S,diacylglyceryl)Cys-, in which Xaa is hydrophobic (preferably Leu), and Yaa (Ala or Ser) and Zaa (Gly or Ala) have small, neutral side chains.. It participates in protein modification; lipoprotein biosynthesis (signal peptide cleavage). Functionally, this protein specifically catalyzes the removal of signal peptides from prolipoproteins. The protein is Lipoprotein signal peptidase of Bacillus cereus (strain AH187).